The following is a 111-amino-acid chain: Probable 4-amino-4-deoxy-L-arabinose-phosphoundecaprenol flippase subunit ArnE (111 aa).

The next 3 membrane-spanning stretches (helical) occupy residues 38–58 (LWLG…LLVL), 61–81 (LPVG…TLAA), and 91–111 (PRHW…GSAA). Residues 40-109 (LGLALICMGA…IISGIIILGS (70 aa)) form the EamA domain.

It belongs to the ArnE family. As to quaternary structure, heterodimer of ArnE and ArnF.

The protein localises to the cell inner membrane. It functions in the pathway bacterial outer membrane biogenesis; lipopolysaccharide biosynthesis. Its function is as follows. Translocates 4-amino-4-deoxy-L-arabinose-phosphoundecaprenol (alpha-L-Ara4N-phosphoundecaprenol) from the cytoplasmic to the periplasmic side of the inner membrane. This chain is Probable 4-amino-4-deoxy-L-arabinose-phosphoundecaprenol flippase subunit ArnE, found in Salmonella paratyphi B (strain ATCC BAA-1250 / SPB7).